Reading from the N-terminus, the 143-residue chain is Antiholin-like protein LrgA (143 aa).

A run of 4 helical transmembrane segments spans residues 6–26 (VYSF…SNII), 30–50 (LPIP…LLCL), 61–81 (LGTA…ISVI), and 97–117 (VIVV…QFIL).

This sequence belongs to the CidA/LrgA family. LrgA subfamily.

It is found in the cell membrane. In terms of biological role, inhibits the expression or activity of extracellular murein hydrolases by interacting, possibly with LrgB, with the holin-like protein CidA. The LrgAB and CidA proteins may affect the proton motive force of the membrane. May be involved in programmed cell death (PCD), possibly triggering PCD in response to antibiotics and environmental stresses. The chain is Antiholin-like protein LrgA from Bacillus anthracis (strain A0248).